Here is a 145-residue protein sequence, read N- to C-terminus: Toxin Res (145 aa).

It belongs to the MbcT/ParT/Res family. Homodimer. Forms a complex with cognate antitoxin Xre; the 2 toxin molecules dimerize and each contacts an Xre homodimer. Most Res-Xre contacts are between the antitoxin molecule closest to the toxin.

In terms of biological role, toxic component of a type II toxin-antitoxin (TA) system. Expression in E.coli inhibits cell growth. In vivo it is probably neutralized by cognate antitoxin Xre; this has not been shown upon expression in E.coli. Probably depletes intracellular NAD(+). This Pseudomonas putida (strain ATCC 47054 / DSM 6125 / CFBP 8728 / NCIMB 11950 / KT2440) protein is Toxin Res.